Here is a 205-residue protein sequence, read N- to C-terminus: Thiamine-phosphate synthase (205 aa).

4-amino-2-methyl-5-(diphosphooxymethyl)pyrimidine is bound by residues 35-39 and N67; that span reads QYRDK. Mg(2+)-binding residues include D68 and D86. Position 105 (T105) interacts with 4-amino-2-methyl-5-(diphosphooxymethyl)pyrimidine. 132 to 134 provides a ligand contact to 2-[(2R,5Z)-2-carboxy-4-methylthiazol-5(2H)-ylidene]ethyl phosphate; sequence SLT. K135 contacts 4-amino-2-methyl-5-(diphosphooxymethyl)pyrimidine. G162 serves as a coordination point for 2-[(2R,5Z)-2-carboxy-4-methylthiazol-5(2H)-ylidene]ethyl phosphate.

The protein belongs to the thiamine-phosphate synthase family. Requires Mg(2+) as cofactor.

The catalysed reaction is 2-[(2R,5Z)-2-carboxy-4-methylthiazol-5(2H)-ylidene]ethyl phosphate + 4-amino-2-methyl-5-(diphosphooxymethyl)pyrimidine + 2 H(+) = thiamine phosphate + CO2 + diphosphate. The enzyme catalyses 2-(2-carboxy-4-methylthiazol-5-yl)ethyl phosphate + 4-amino-2-methyl-5-(diphosphooxymethyl)pyrimidine + 2 H(+) = thiamine phosphate + CO2 + diphosphate. It catalyses the reaction 4-methyl-5-(2-phosphooxyethyl)-thiazole + 4-amino-2-methyl-5-(diphosphooxymethyl)pyrimidine + H(+) = thiamine phosphate + diphosphate. Its pathway is cofactor biosynthesis; thiamine diphosphate biosynthesis; thiamine phosphate from 4-amino-2-methyl-5-diphosphomethylpyrimidine and 4-methyl-5-(2-phosphoethyl)-thiazole: step 1/1. Its function is as follows. Condenses 4-methyl-5-(beta-hydroxyethyl)thiazole monophosphate (THZ-P) and 2-methyl-4-amino-5-hydroxymethyl pyrimidine pyrophosphate (HMP-PP) to form thiamine monophosphate (TMP). The protein is Thiamine-phosphate synthase of Pseudomonas savastanoi pv. phaseolicola (strain 1448A / Race 6) (Pseudomonas syringae pv. phaseolicola (strain 1448A / Race 6)).